We begin with the raw amino-acid sequence, 297 residues long: Aspartate carbamoyltransferase catalytic subunit (297 aa).

2 residues coordinate carbamoyl phosphate: Arg-48 and Thr-49. Lys-76 provides a ligand contact to L-aspartate. Carbamoyl phosphate contacts are provided by Arg-98, His-129, and Gln-132. The L-aspartate site is built by Arg-162 and Arg-214. Positions 257 and 258 each coordinate carbamoyl phosphate.

It belongs to the aspartate/ornithine carbamoyltransferase superfamily. ATCase family. Heterododecamer (2C3:3R2) of six catalytic PyrB chains organized as two trimers (C3), and six regulatory PyrI chains organized as three dimers (R2).

The catalysed reaction is carbamoyl phosphate + L-aspartate = N-carbamoyl-L-aspartate + phosphate + H(+). The protein operates within pyrimidine metabolism; UMP biosynthesis via de novo pathway; (S)-dihydroorotate from bicarbonate: step 2/3. Functionally, catalyzes the condensation of carbamoyl phosphate and aspartate to form carbamoyl aspartate and inorganic phosphate, the committed step in the de novo pyrimidine nucleotide biosynthesis pathway. The sequence is that of Aspartate carbamoyltransferase catalytic subunit from Leuconostoc mesenteroides subsp. mesenteroides (strain ATCC 8293 / DSM 20343 / BCRC 11652 / CCM 1803 / JCM 6124 / NCDO 523 / NBRC 100496 / NCIMB 8023 / NCTC 12954 / NRRL B-1118 / 37Y).